Here is a 275-residue protein sequence, read N- to C-terminus: Phosphatidylglycerol--prolipoprotein diacylglyceryl transferase (275 aa).

4 helical membrane-spanning segments follow: residues 20 to 40 (FTIH…LLLA), 58 to 78 (LLWA…VFQW), 88 to 108 (IIAI…GFIV), and 118 to 138 (LSSW…QGIG). Residue arginine 139 participates in a 1,2-diacyl-sn-glycero-3-phospho-(1'-sn-glycerol) binding. A run of 2 helical transmembrane segments spans residues 209-229 (GEIF…IEGM) and 239-259 (IRIS…ILII).

This sequence belongs to the Lgt family.

It is found in the cell membrane. It catalyses the reaction L-cysteinyl-[prolipoprotein] + a 1,2-diacyl-sn-glycero-3-phospho-(1'-sn-glycerol) = an S-1,2-diacyl-sn-glyceryl-L-cysteinyl-[prolipoprotein] + sn-glycerol 1-phosphate + H(+). Its pathway is protein modification; lipoprotein biosynthesis (diacylglyceryl transfer). Its function is as follows. Catalyzes the transfer of the diacylglyceryl group from phosphatidylglycerol to the sulfhydryl group of the N-terminal cysteine of a prolipoprotein, the first step in the formation of mature lipoproteins. The protein is Phosphatidylglycerol--prolipoprotein diacylglyceryl transferase of Limosilactobacillus reuteri (strain DSM 20016) (Lactobacillus reuteri).